The chain runs to 233 residues: MSTHIGAKQNEIASTVLLPGDPLRAKFIAENFLEDVICYNDVRGMYGYTGTYKGKRVSVQGTGMGIPSISIYANELIESYGVKNLIRVGTCGSINKDIKVRDIILAMGACTNSGTNRMRFNGMDFAPIASFDLLKKAYDIGKSKGLDIKVGNILSSDLFYNDDKDAIKLWSKYGVLGIEMEASGLYTLGAKYGVNTLAILTVSDSIVTGEETTAKERETTFTKMMEIALELAE.

Residue H4 coordinates a purine D-ribonucleoside. Phosphate is bound by residues G20, R24, R43, and 87–90; that span reads RVGT. A purine D-ribonucleoside contacts are provided by residues 179 to 181 and 203 to 204; these read EME and SD. D204 acts as the Proton donor in catalysis.

The protein belongs to the PNP/UDP phosphorylase family. Homohexamer; trimer of homodimers.

The enzyme catalyses a purine D-ribonucleoside + phosphate = a purine nucleobase + alpha-D-ribose 1-phosphate. The catalysed reaction is a purine 2'-deoxy-D-ribonucleoside + phosphate = a purine nucleobase + 2-deoxy-alpha-D-ribose 1-phosphate. Functionally, catalyzes the reversible phosphorolytic breakdown of the N-glycosidic bond in the beta-(deoxy)ribonucleoside molecules, with the formation of the corresponding free purine bases and pentose-1-phosphate. This is Purine nucleoside phosphorylase DeoD-type from Clostridium novyi (strain NT).